A 112-amino-acid polypeptide reads, in one-letter code: Peptidyl-prolyl cis-trans isomerase (112 aa).

The interval 1–22 (MGVEKQVISSGNGQDFPKPGDR) is disordered. The region spanning 20-108 (GDRITMHYTG…LFDVELLAIN (89 aa)) is the PPIase FKBP-type domain.

The protein belongs to the FKBP-type PPIase family. FKBP1 subfamily.

The protein localises to the cytoplasm. The protein resides in the nucleus. The enzyme catalyses [protein]-peptidylproline (omega=180) = [protein]-peptidylproline (omega=0). PPIases accelerate the folding of proteins. It catalyzes the cis-trans isomerization of proline imidic peptide bonds in oligopeptides. Has an important role in sexual development and serves as the target for rapamycin action. The polypeptide is Peptidyl-prolyl cis-trans isomerase (fkh1) (Schizosaccharomyces pombe (strain 972 / ATCC 24843) (Fission yeast)).